The sequence spans 542 residues: GMP synthase [glutamine-hydrolyzing] (542 aa).

Positions 28-218 (MLVILDFGSQ…VYHICQCEPT (191 aa)) constitute a Glutamine amidotransferase type-1 domain. Catalysis depends on Cys-105, which acts as the Nucleophile. Catalysis depends on residues His-192 and Glu-194. The region spanning 219–417 (WTTEAFVEES…IGLPEEIVRR (199 aa)) is the GMPS ATP-PPase domain. Position 246–252 (246–252 (SGGVDSS)) interacts with ATP.

As to quaternary structure, homodimer.

The catalysed reaction is XMP + L-glutamine + ATP + H2O = GMP + L-glutamate + AMP + diphosphate + 2 H(+). Its pathway is purine metabolism; GMP biosynthesis; GMP from XMP (L-Gln route): step 1/1. Functionally, catalyzes the synthesis of GMP from XMP. This chain is GMP synthase [glutamine-hydrolyzing], found in Rippkaea orientalis (strain PCC 8801 / RF-1) (Cyanothece sp. (strain PCC 8801)).